Reading from the N-terminus, the 410-residue chain is Imidazolonepropionase (410 aa).

2 residues coordinate Fe(3+): His73 and His75. Zn(2+) contacts are provided by His73 and His75. 3 residues coordinate 4-imidazolone-5-propanoate: Arg82, Tyr145, and His178. Tyr145 contributes to the N-formimidoyl-L-glutamate binding site. His243 lines the Fe(3+) pocket. His243 lines the Zn(2+) pocket. Gln246 serves as a coordination point for 4-imidazolone-5-propanoate. Residue Asp318 participates in Fe(3+) binding. Zn(2+) is bound at residue Asp318. N-formimidoyl-L-glutamate is bound by residues Asn320 and Gly322. A 4-imidazolone-5-propanoate-binding site is contributed by Ser323.

Belongs to the metallo-dependent hydrolases superfamily. HutI family. The cofactor is Zn(2+). It depends on Fe(3+) as a cofactor.

It localises to the cytoplasm. It catalyses the reaction 4-imidazolone-5-propanoate + H2O = N-formimidoyl-L-glutamate. It functions in the pathway amino-acid degradation; L-histidine degradation into L-glutamate; N-formimidoyl-L-glutamate from L-histidine: step 3/3. Functionally, catalyzes the hydrolytic cleavage of the carbon-nitrogen bond in imidazolone-5-propanoate to yield N-formimidoyl-L-glutamate. It is the third step in the universal histidine degradation pathway. The sequence is that of Imidazolonepropionase from Shewanella frigidimarina (strain NCIMB 400).